We begin with the raw amino-acid sequence, 316 residues long: Coproporphyrin III ferrochelatase (316 aa).

Fe-coproporphyrin III-binding positions include tyrosine 13, arginine 30, 46 to 47 (RY), serine 54, and tyrosine 125. Residues histidine 183 and glutamate 264 each coordinate Fe(2+).

It belongs to the ferrochelatase family.

The protein localises to the cytoplasm. It carries out the reaction Fe-coproporphyrin III + 2 H(+) = coproporphyrin III + Fe(2+). Its pathway is porphyrin-containing compound metabolism; protoheme biosynthesis. Involved in coproporphyrin-dependent heme b biosynthesis. Catalyzes the insertion of ferrous iron into coproporphyrin III to form Fe-coproporphyrin III. The polypeptide is Coproporphyrin III ferrochelatase (Geobacillus thermodenitrificans (strain NG80-2)).